The primary structure comprises 961 residues: E4 ubiquitin-protein ligase UFD2 (961 aa).

A U-box domain is found at 880-954 (DVPDEFLDPL…LCFKKQKKEE (75 aa)).

Belongs to the ubiquitin conjugation factor E4 family. In terms of assembly, interacts with CDC48. Interacts with the ubiquitin-like domain of RAD23 and DSK2. Interacts with PEX29.

Its subcellular location is the cytoplasm. It is found in the nucleus. The catalysed reaction is S-ubiquitinyl-[E2 ubiquitin-conjugating enzyme]-L-cysteine + [acceptor protein]-L-lysine = [E2 ubiquitin-conjugating enzyme]-L-cysteine + N(6)-ubiquitinyl-[acceptor protein]-L-lysine.. It functions in the pathway protein modification; protein ubiquitination. Its function is as follows. E4 ubiquitin chain-elongation enzyme specifically involved in polyubiquitin chain assembly. Binds to CDC48 and elongates mono- and diubiquitinated ERAD substrates presented by the UFD1-NPL4-CDC48/p97 (UNC) AAA ATPase complex to a chain length of 4 to 6 ubiquitin moieties. Delivers these polyubiquitinated substrates to RAD23 and DSK2, which target them to the proteasome. Has E3 ubiquitin-protein ligase activity, accepting ubiquitin from its cognate E2 ubiquitin-conjugating enzyme UBC4. Enhances ubiquitination at 'Lys-48', but not at 'Lys-29' of the Ub moiety. Promotes ubiquitin chain elongation at 'Lys-48' on the DOA10 substrate PEX29. Also involved in the proteolytic processing of the ER-bound transcription factor SPT23. The protein is E4 ubiquitin-protein ligase UFD2 (UFD2) of Saccharomyces cerevisiae (strain ATCC 204508 / S288c) (Baker's yeast).